A 487-amino-acid chain; its full sequence is MRAQPKASHFIDGEYVEDAAGTVIESIYPATGEIIARLHAATPGIVEKAIAAAKRAQPEWAAMSPTARGRILKRAAELMRQRNRELSELETLDTGKPIQETIVADPTSGADSFEFFGGVAPAALNGDYIPLGGDFAYTKRVPLGVCVGIGAWNYPQQIACWKGAPALVAGNAMVFKPSENTPLGALKIAEILIEAGLPKGLFNVIQGDRATGPLLVNHPDVAKVSLTGSVPTGKKVAGAAAAELKHVTMELGGKSPLIVFDDADLESAIGGAMLGNFYSTGQVCSNGTRVFVQRKIKEPFLARLKERTEAIVIGDPLDEATQLGPMVSAAQRDKVFSYIGKGKAEGARLVTGGGIPNNVSGEGTYIQPTVFADVTDGMTIAREEIFGPVMCVLDFDDEVEVIARANATEFGLSAGVFTADLTRAHRVADRLEAGTLWINTYNLCPVEIPFGGSKQSGFGRENSVAALNHYTELKTVYVGMGPVEAPY.

The K(+) site is built by serine 26, isoleucine 27, and aspartate 93. NAD(+) is bound at residue 150–152 (GAW). Residue lysine 162 is the Charge relay system of the active site. Residues 176–179 (KPSE) and 229–232 (SVPT) contribute to the NAD(+) site. A K(+)-binding site is contributed by leucine 244. Glutamate 250 (proton acceptor) is an active-site residue. Glycine 252, cysteine 284, and glutamate 384 together coordinate NAD(+). Residue cysteine 284 is the Nucleophile of the active site. Cysteine 284 carries the cysteine sulfenic acid (-SOH) modification. Lysine 454 and glycine 457 together coordinate K(+). Glutamate 461 serves as the catalytic Charge relay system.

It belongs to the aldehyde dehydrogenase family. Dimer of dimers. It depends on K(+) as a cofactor.

The enzyme catalyses betaine aldehyde + NAD(+) + H2O = glycine betaine + NADH + 2 H(+). The protein operates within amine and polyamine biosynthesis; betaine biosynthesis via choline pathway; betaine from betaine aldehyde: step 1/1. Functionally, involved in the biosynthesis of the osmoprotectant glycine betaine. Catalyzes the irreversible oxidation of betaine aldehyde to the corresponding acid. This chain is Betaine aldehyde dehydrogenase 1, found in Rhizobium meliloti (strain 1021) (Ensifer meliloti).